The chain runs to 680 residues: Probable oxidoreductase YoaE (680 aa).

The 4Fe-4S Mo/W bis-MGD-type domain occupies 9–66; the sequence is NGIFKSVCSLDCPDQCGLLIHKKDGKIVKVQGDPDHPVTAGNICNKVRNMTERIYDEK. [4Fe-4S] cluster-binding residues include C16, C20, C24, and C52.

This sequence belongs to the prokaryotic molybdopterin-containing oxidoreductase family. It depends on Mo-bis(molybdopterin guanine dinucleotide) as a cofactor.

This chain is Probable oxidoreductase YoaE (yoaE), found in Bacillus subtilis (strain 168).